The chain runs to 204 residues: MAASITASVWGTLLKIHRGLTASGCLPQSCVHTSAVLERSRHWEMKNRIVYPPQLPDEPRRPAEVYHCRKQIKYSKDKMWYLAKLIRGMSVDQAIAQLEFNDKKGAKIMKEVLLEAQDLAVRNHNVEFKSNLYVAESFSNKGKYLKRIRYHGRGMFGIMDKVYCHYFVKLVEGPPSPKEEPMTGFQQAKEYVQQLRSRTITHGL.

Residues 1-27 constitute a mitochondrion transit peptide; sequence MAASITASVWGTLLKIHRGLTASGCLP.

It belongs to the universal ribosomal protein uL22 family. In terms of assembly, component of the mitochondrial ribosome large subunit (39S) which comprises a 16S rRNA and about 50 distinct proteins.

The protein resides in the mitochondrion. The protein is Large ribosomal subunit protein uL22m (mrpl22) of Xenopus tropicalis (Western clawed frog).